A 590-amino-acid chain; its full sequence is Auxin response factor 20 (590 aa).

The TF-B3 DNA-binding region spans 126 to 224 (FTKVLTASDT…ELRVGIRRAR (99 aa)). The region spanning 495–576 (RTCTKVQMQG…MVKKILIYSK (82 aa)) is the PB1 domain.

It belongs to the ARF family. As to quaternary structure, homodimers and heterodimers.

The protein resides in the nucleus. Functionally, auxin response factors (ARFs) are transcriptional factors that bind specifically to the DNA sequence 5'-TGTCTC-3' found in the auxin-responsive promoter elements (AuxREs). Could act as transcriptional activator or repressor. Formation of heterodimers with Aux/IAA proteins may alter their ability to modulate early auxin response genes expression. The sequence is that of Auxin response factor 20 (ARF20) from Arabidopsis thaliana (Mouse-ear cress).